A 306-amino-acid polypeptide reads, in one-letter code: Apolipoprotein E (306 aa).

The signal sequence occupies residues 1-18; that stretch reads MKVLWAVLVVTLLAGCQA. 8 tandem repeats follow at residues 81–102, 103–124, 125–146, 147–168, 169–190, 191–212, 213–230, and 231–252. An 8 X 22 AA approximate tandem repeats region spans residues 81 to 252; it reads VLMEDTMKEV…RLDVVREQME (172 aa). Met144 carries the post-translational modification Methionine sulfoxide. Ser148 is subject to Phosphoserine. The tract at residues 159–169 is LDL and other lipoprotein receptors binding; it reads HLRKLRKRLLR. Residue 163-166 participates in heparin binding; it reads LRKR. The lipid-binding and lipoprotein association stretch occupies residues 211–280; that stretch reads AAQTSQPLRE…GWFEPVVEDM (70 aa). 226–233 provides a ligand contact to heparin; it reads GERLRGRL. Residues 268 to 280 form a specificity for association with VLDL region; it reads RLKGWFEPVVEDM.

Belongs to the apolipoprotein A1/A4/E family. In terms of assembly, homotetramer. May interact with ABCA1; functionally associated with ABCA1 in the biogenesis of HDLs. May interact with APP/A4 amyloid-beta peptide; the interaction is extremely stable in vitro but its physiological significance is unclear. May interact with MAPT. May interact with MAP2. In the cerebrospinal fluid, interacts with secreted SORL1. Interacts with PMEL; this allows the loading of PMEL luminal fragment on ILVs to induce fibril nucleation. Post-translationally, APOE exists as multiple glycosylated and sialylated glycoforms within cells and in plasma. The extent of glycosylation and sialylation are tissue and context specific. Glycated in plasma VLDL. In terms of processing, phosphorylated by FAM20C in the extracellular medium.

It localises to the secreted. The protein localises to the extracellular space. It is found in the extracellular matrix. The protein resides in the extracellular vesicle. Its subcellular location is the endosome. It localises to the multivesicular body. Functionally, APOE is an apolipoprotein, a protein associating with lipid particles, that mainly functions in lipoprotein-mediated lipid transport between organs via the plasma and interstitial fluids. APOE is a core component of plasma lipoproteins and is involved in their production, conversion and clearance. Apolipoproteins are amphipathic molecules that interact both with lipids of the lipoprotein particle core and the aqueous environment of the plasma. As such, APOE associates with chylomicrons, chylomicron remnants, very low density lipoproteins (VLDL) and intermediate density lipoproteins (IDL) but shows a preferential binding to high-density lipoproteins (HDL). It also binds a wide range of cellular receptors including the LDL receptor/LDLR, the LDL receptor-related proteins LRP1, LRP2 and LRP8 and the very low-density lipoprotein receptor/VLDLR that mediate the cellular uptake of the APOE-containing lipoprotein particles. Finally, APOE also has a heparin-binding activity and binds heparan-sulfate proteoglycans on the surface of cells, a property that supports the capture and the receptor-mediated uptake of APOE-containing lipoproteins by cells. A main function of APOE is to mediate lipoprotein clearance through the uptake of chylomicrons, VLDLs, and HDLs by hepatocytes. APOE is also involved in the biosynthesis by the liver of VLDLs as well as their uptake by peripheral tissues ensuring the delivery of triglycerides and energy storage in muscle, heart and adipose tissues. By participating in the lipoprotein-mediated distribution of lipids among tissues, APOE plays a critical role in plasma and tissues lipid homeostasis. APOE is also involved in two steps of reverse cholesterol transport, the HDLs-mediated transport of cholesterol from peripheral tissues to the liver, and thereby plays an important role in cholesterol homeostasis. First, it is functionally associated with ABCA1 in the biogenesis of HDLs in tissues. Second, it is enriched in circulating HDLs and mediates their uptake by hepatocytes. APOE also plays an important role in lipid transport in the central nervous system, regulating neuron survival and sprouting. The polypeptide is Apolipoprotein E (APOE) (Hystrix brachyura (Malayan porcupine)).